The sequence spans 361 residues: tRNA-specific 2-thiouridylase MnmA (361 aa).

ATP-binding positions include 6 to 13 and I32; that span reads LVSGGVDS. The interaction with target base in tRNA stretch occupies residues 93–95; sequence NPD. C98 acts as the Nucleophile in catalysis. C98 and C193 form a disulfide bridge. G121 contacts ATP. The interval 143 to 145 is interaction with tRNA; it reads KDQ. The active-site Cysteine persulfide intermediate is the C193.

It belongs to the MnmA/TRMU family.

It is found in the cytoplasm. It catalyses the reaction S-sulfanyl-L-cysteinyl-[protein] + uridine(34) in tRNA + AH2 + ATP = 2-thiouridine(34) in tRNA + L-cysteinyl-[protein] + A + AMP + diphosphate + H(+). Functionally, catalyzes the 2-thiolation of uridine at the wobble position (U34) of tRNA, leading to the formation of s(2)U34. The polypeptide is tRNA-specific 2-thiouridylase MnmA (Porphyromonas gingivalis (strain ATCC BAA-308 / W83)).